We begin with the raw amino-acid sequence, 1158 residues long: ATP-dependent helicase/deoxyribonuclease subunit B (1158 aa).

This sequence belongs to the helicase family. AddB/RexB type 2 subfamily. As to quaternary structure, heterodimer of AddA and RexB. Mg(2+) is required as a cofactor.

Its function is as follows. The heterodimer acts as both an ATP-dependent DNA helicase and an ATP-dependent, dual-direction single-stranded exonuclease. Recognizes the chi site generating a DNA molecule suitable for the initiation of homologous recombination. This subunit has 5' -&gt; 3' nuclease activity but not helicase activity. The chain is ATP-dependent helicase/deoxyribonuclease subunit B from Lactobacillus gasseri (strain ATCC 33323 / DSM 20243 / BCRC 14619 / CIP 102991 / JCM 1131 / KCTC 3163 / NCIMB 11718 / NCTC 13722 / AM63).